A 238-amino-acid chain; its full sequence is D/L-lactic acid transporter (238 aa).

2 helical membrane-spanning segments follow: residues 2-22 (VHQL…GVGV) and 39-59 (IFAI…FGNV). Positions 62–64 (NPA) match the NPA 1 motif. 3 consecutive transmembrane segments (helical) span residues 80–100 (FIPY…IVWI), 135–155 (FFVE…ISEI), and 158–178 (PGIV…GLGG). Residues 185 to 187 (NLA) carry the NPA 2 motif. Residues 211-231 (YGIIVPGIAPFVGAAIAAWFM) traverse the membrane as a helical segment.

The protein belongs to the MIP/aquaporin (TC 1.A.8) family.

Its subcellular location is the cell membrane. In terms of biological role, transporter that facilitates the transmembrane diffusion of D/L-lactic acid. Is involved in the cellular racemization of lactate and lactate metabolism. The transported molecule is indeed lactic acid and not the lactate anion, in agreement with the assumption that, with very few exceptions, MIPs (major intrinsic proteins) only facilitate the transport of uncharged solutes. Also facilitates urea and H(2)O(2) diffusion across membranes, but is not permeable to water, glycerol and dihydroxyacetone. This chain is D/L-lactic acid transporter, found in Lactiplantibacillus plantarum (strain ATCC BAA-793 / NCIMB 8826 / WCFS1) (Lactobacillus plantarum).